Reading from the N-terminus, the 104-residue chain is Transcription factor S (104 aa).

Residues Cys-4, Cys-7, Cys-20, Cys-22, Cys-65, Cys-68, Cys-93, and Cys-96 each coordinate Zn(2+). The segment at 4-22 adopts a C4-type zinc-finger fold; the sequence is CPKCGAVMFPSEGKFKCQC. The segment at 61–101 adopts a TFIIS-type zinc-finger fold; sequence TRVECPKCGNMEAFWWLQQTRRADESETRFFRCTRCKHTWR.

The protein belongs to the archaeal RpoM/eukaryotic RPA12/RPB9/RPC11 RNA polymerase family.

Functionally, induces RNA cleavage activity in the RNA polymerase. In its presence, the cleavage activity of the RNA polymerase truncates the RNA back to position +15 in a stepwise manner by releasing mainly dinucleotides from the 3'-end of the nascent RNA. The truncated RNAs are able to continue elongation. Involved in transcriptional proofreading and fidelity. Misincorporation of nucleotides during elongation of transcription leads to arrested elongation complexes which are rescued by TFS-promoted removal of a dinucleotide from the 3'-end. TFS is able to induce a cleavage resynthesis cycle in stalled elongation complexes (resulting from the next missing nucleotide or a reduced incorporation rate of a wrong nucleotide) preventing misincorporation and enabling proofreading in a post-incorporation manner. Pausing of elongation complexes is the main determinant of TFS-induced RNA cleavage. This chain is Transcription factor S, found in Methanothermobacter thermautotrophicus (strain ATCC 29096 / DSM 1053 / JCM 10044 / NBRC 100330 / Delta H) (Methanobacterium thermoautotrophicum).